Reading from the N-terminus, the 204-residue chain is Transmembrane protein 253 (204 aa).

4 helical membrane passes run 33-53 (LVLA…TISV), 62-82 (LVTA…IITL), 96-116 (MMIS…IEVM), and 138-158 (LSAE…LFLL). The interval 184–204 (EEVSGLENGPVVASTGNRTDE) is disordered.

Its subcellular location is the membrane. The protein is Transmembrane protein 253 (Tmem253) of Mus musculus (Mouse).